A 355-amino-acid polypeptide reads, in one-letter code: Phosphoribosylformylglycinamidine cyclo-ligase (355 aa).

This sequence belongs to the AIR synthase family.

The protein localises to the cytoplasm. The enzyme catalyses 2-formamido-N(1)-(5-O-phospho-beta-D-ribosyl)acetamidine + ATP = 5-amino-1-(5-phospho-beta-D-ribosyl)imidazole + ADP + phosphate + H(+). It participates in purine metabolism; IMP biosynthesis via de novo pathway; 5-amino-1-(5-phospho-D-ribosyl)imidazole from N(2)-formyl-N(1)-(5-phospho-D-ribosyl)glycinamide: step 2/2. This chain is Phosphoribosylformylglycinamidine cyclo-ligase, found in Paraburkholderia phymatum (strain DSM 17167 / CIP 108236 / LMG 21445 / STM815) (Burkholderia phymatum).